The sequence spans 248 residues: uncharacterized protein (248 aa).

In terms of domain architecture, ABC transporter spans 7 to 246 (VQLSNLSWTF…PASTILLPTS (240 aa)). 43–50 (GQSGSGKS) contributes to the ATP binding site.

This sequence belongs to the ABC transporter superfamily.

This is an uncharacterized protein from Mycobacterium tuberculosis (strain CDC 1551 / Oshkosh).